A 114-amino-acid polypeptide reads, in one-letter code: NAD(P)H-quinone oxidoreductase subunit M (114 aa).

Belongs to the complex I NdhM subunit family. As to quaternary structure, NDH-1 can be composed of about 15 different subunits; different subcomplexes with different compositions have been identified which probably have different functions.

The protein localises to the cellular thylakoid membrane. It carries out the reaction a plastoquinone + NADH + (n+1) H(+)(in) = a plastoquinol + NAD(+) + n H(+)(out). The enzyme catalyses a plastoquinone + NADPH + (n+1) H(+)(in) = a plastoquinol + NADP(+) + n H(+)(out). In terms of biological role, NDH-1 shuttles electrons from an unknown electron donor, via FMN and iron-sulfur (Fe-S) centers, to quinones in the respiratory and/or the photosynthetic chain. The immediate electron acceptor for the enzyme in this species is believed to be plastoquinone. Couples the redox reaction to proton translocation, and thus conserves the redox energy in a proton gradient. Cyanobacterial NDH-1 also plays a role in inorganic carbon-concentration. This Acaryochloris marina (strain MBIC 11017) protein is NAD(P)H-quinone oxidoreductase subunit M.